The primary structure comprises 274 residues: Carboxy-S-adenosyl-L-methionine synthase (274 aa).

S-adenosyl-L-methionine is bound by residues Y59, 93–95, 149–150, N164, and R231; these read GCS and DI.

Belongs to the class I-like SAM-binding methyltransferase superfamily. Cx-SAM synthase family. As to quaternary structure, homodimer.

It carries out the reaction prephenate + S-adenosyl-L-methionine = carboxy-S-adenosyl-L-methionine + 3-phenylpyruvate + H2O. In terms of biological role, catalyzes the conversion of S-adenosyl-L-methionine (SAM) to carboxy-S-adenosyl-L-methionine (Cx-SAM). In Psychrobacter sp. (strain PRwf-1), this protein is Carboxy-S-adenosyl-L-methionine synthase.